A 552-amino-acid chain; its full sequence is 5'-AMP-activated protein kinase catalytic subunit alpha-2 (552 aa).

Positions 16–268 constitute a Protein kinase domain; it reads YVLGDTLGVG…IKDIREHEWF (253 aa). ATP-binding positions include 22-30 and K45; that span reads LGVGTFGKV. Catalysis depends on D139, which acts as the Proton acceptor. T172 is modified (phosphothreonine; by LKB1 and CaMKK2). The residue at position 258 (T258) is a Phosphothreonine. Positions 291–376 are AIS; the sequence is EAVKEVCEKF…PERMPPLIAD (86 aa). S377 bears the Phosphoserine mark. The tract at residues 478–520 is disordered; it reads EQRSGSSTPQRSCSAAGLHRPRSSVDSSTAENHSLSGSLTGSL. A compositionally biased stretch (polar residues) spans 480-490; it reads RSGSSTPQRSC. Position 491 is a phosphoserine (S491). A compositionally biased stretch (polar residues) spans 501–510; that stretch reads SVDSSTAENH. Low complexity predominate over residues 511-520; it reads SLSGSLTGSL.

This sequence belongs to the protein kinase superfamily. CAMK Ser/Thr protein kinase family. SNF1 subfamily. As to quaternary structure, AMPK is a heterotrimer of an alpha catalytic subunit (PRKAA1 or PRKAA2), a beta (PRKAB1 or PRKAB2) and a gamma non-catalytic subunits (PRKAG1, PRKAG2 or PRKAG3). Interacts with FNIP1 and FNIP2. Associates with internalized INSR complexes on Golgi/endosomal membranes; PRKAA2/AMPK2 together with ATIC and HACD3/PTPLAD1 is proposed to be part of a signaling network regulating INSR autophosphorylation and endocytosis. Interacts with DUSP29. Interacts with ARF6. The phosphorylated form at Thr-172 mediated by CamKK2 interacts with ACSS2. Requires Mg(2+) as cofactor. Ubiquitinated. Post-translationally, phosphorylated at Thr-172 by STK11/LKB1 in complex with STE20-related adapter-alpha (STRADA) pseudo kinase and CAB39. Also phosphorylated at Thr-172 by CAMKK2; triggered by a rise in intracellular calcium ions, without detectable changes in the AMP/ATP ratio. CAMKK1 can also phosphorylate Thr-172, but at much lower level. Dephosphorylated by protein phosphatase 2A and 2C (PP2A and PP2C). Phosphorylated by ULK1; leading to negatively regulate AMPK activity and suggesting the existence of a regulatory feedback loop between ULK1 and AMPK. Dephosphorylated by PPM1A and PPM1B at Thr-172 (mediated by STK11/LKB1). As to expression, skeletal muscle, lower levels in liver, heart and kidney.

It localises to the cytoplasm. The protein resides in the nucleus. The catalysed reaction is L-seryl-[protein] + ATP = O-phospho-L-seryl-[protein] + ADP + H(+). The enzyme catalyses L-threonyl-[protein] + ATP = O-phospho-L-threonyl-[protein] + ADP + H(+). It catalyses the reaction L-seryl-[acetyl-CoA carboxylase] + ATP = O-phospho-L-seryl-[acetyl-CoA carboxylase] + ADP + H(+). It carries out the reaction L-seryl-[3-hydroxy-3-methylglutaryl-coenzyme A reductase] + ATP = O-phospho-L-seryl-[3-hydroxy-3-methylglutaryl-coenzyme A reductase] + ADP + H(+). Activated by phosphorylation on Thr-172. Binding of AMP to non-catalytic gamma subunit (PRKAG1, PRKAG2 or PRKAG3) results in allosteric activation, inducing phosphorylation on Thr-172. AMP-binding to gamma subunit also sustains activity by preventing dephosphorylation of Thr-172. ADP also stimulates Thr-172 phosphorylation, without stimulating already phosphorylated AMPK. ATP promotes dephosphorylation of Thr-172, rendering the enzyme inactive. Under physiological conditions AMPK mainly exists in its inactive form in complex with ATP, which is much more abundant than AMP. Selectively inhibited by compound C (6-[4-(2-Piperidin-1-yl-ethoxy)-phenyl)]-3-pyridin-4-yl-pyyrazolo[1,5-a] pyrimidine. Activated by resveratrol, a natural polyphenol present in red wine, and S17834, a synthetic polyphenol. Salicylate/aspirin directly activates kinase activity, primarily by inhibiting Thr-172 dephosphorylation. Functionally, catalytic subunit of AMP-activated protein kinase (AMPK), an energy sensor protein kinase that plays a key role in regulating cellular energy metabolism. In response to reduction of intracellular ATP levels, AMPK activates energy-producing pathways and inhibits energy-consuming processes: inhibits protein, carbohydrate and lipid biosynthesis, as well as cell growth and proliferation. AMPK acts via direct phosphorylation of metabolic enzymes, and by longer-term effects via phosphorylation of transcription regulators. Regulates lipid synthesis by phosphorylating and inactivating lipid metabolic enzymes such as ACACA, ACACB, GYS1, HMGCR and LIPE; regulates fatty acid and cholesterol synthesis by phosphorylating acetyl-CoA carboxylase (ACACA and ACACB) and hormone-sensitive lipase (LIPE) enzymes, respectively. Promotes lipolysis of lipid droplets by mediating phosphorylation of isoform 1 of CHKA (CHKalpha2). Regulates insulin-signaling and glycolysis by phosphorylating IRS1, PFKFB2 and PFKFB3. Involved in insulin receptor/INSR internalization. AMPK stimulates glucose uptake in muscle by increasing the translocation of the glucose transporter SLC2A4/GLUT4 to the plasma membrane, possibly by mediating phosphorylation of TBC1D4/AS160. Regulates transcription and chromatin structure by phosphorylating transcription regulators involved in energy metabolism such as CRTC2/TORC2, FOXO3, histone H2B, HDAC5, MEF2C, MLXIPL/ChREBP, EP300, HNF4A, p53/TP53, SREBF1, SREBF2 and PPARGC1A. Acts as a key regulator of glucose homeostasis in liver by phosphorylating CRTC2/TORC2, leading to CRTC2/TORC2 sequestration in the cytoplasm. In response to stress, phosphorylates 'Ser-36' of histone H2B (H2BS36ph), leading to promote transcription. Acts as a key regulator of cell growth and proliferation by phosphorylating FNIP1, TSC2, RPTOR, WDR24 and ATG1/ULK1: in response to nutrient limitation, negatively regulates the mTORC1 complex by phosphorylating RPTOR component of the mTORC1 complex and by phosphorylating and activating TSC2. Also phosphorylates and inhibits GATOR2 subunit WDR24 in response to nutrient limitation, leading to suppress glucose-mediated mTORC1 activation. In response to energetic stress, phosphorylates FNIP1, inactivating the non-canonical mTORC1 signaling, thereby promoting nuclear translocation of TFEB and TFE3, and inducing transcription of lysosomal or autophagy genes. In response to nutrient limitation, promotes autophagy by phosphorylating and activating ATG1/ULK1. In that process, it also activates WDR45/WIPI4. Phosphorylates CASP6, thereby preventing its autoprocessing and subsequent activation. AMPK also acts as a regulator of circadian rhythm by mediating phosphorylation of CRY1, leading to destabilize it. May regulate the Wnt signaling pathway by phosphorylating CTNNB1, leading to stabilize it. Also acts as a regulator of cellular polarity by remodeling the actin cytoskeleton; probably by indirectly activating myosin. Also phosphorylates CFTR, EEF2K, KLC1, NOS3 and SLC12A1. Plays an important role in the differential regulation of pro-autophagy (composed of PIK3C3, BECN1, PIK3R4 and UVRAG or ATG14) and non-autophagy (composed of PIK3C3, BECN1 and PIK3R4) complexes, in response to glucose starvation. Can inhibit the non-autophagy complex by phosphorylating PIK3C3 and can activate the pro-autophagy complex by phosphorylating BECN1. Upon glucose starvation, promotes ARF6 activation in a kinase-independent manner leading to cell migration. Upon glucose deprivation mediates the phosphorylation of ACSS2 at 'Ser-659', which exposes the nuclear localization signal of ACSS2, required for its interaction with KPNA1 and nuclear translocation. Upon stress, regulates mitochondrial fragmentation through phosphorylation of MTFR1L. The chain is 5'-AMP-activated protein kinase catalytic subunit alpha-2 (Prkaa2) from Rattus norvegicus (Rat).